Consider the following 250-residue polypeptide: UDP-2,3-diacylglucosamine hydrolase (250 aa).

The Mn(2+) site is built by Asp8, His10, Asp41, Asn79, and His115. Position 79 to 80 (79 to 80 (NH)) interacts with substrate. Substrate contacts are provided by Asp123, Thr165, Lys168, and His196. Residues His196 and His198 each contribute to the Mn(2+) site.

This sequence belongs to the LpxH family. Mn(2+) serves as cofactor.

The protein localises to the cell inner membrane. The enzyme catalyses UDP-2-N,3-O-bis[(3R)-3-hydroxytetradecanoyl]-alpha-D-glucosamine + H2O = 2-N,3-O-bis[(3R)-3-hydroxytetradecanoyl]-alpha-D-glucosaminyl 1-phosphate + UMP + 2 H(+). It functions in the pathway glycolipid biosynthesis; lipid IV(A) biosynthesis; lipid IV(A) from (3R)-3-hydroxytetradecanoyl-[acyl-carrier-protein] and UDP-N-acetyl-alpha-D-glucosamine: step 4/6. Hydrolyzes the pyrophosphate bond of UDP-2,3-diacylglucosamine to yield 2,3-diacylglucosamine 1-phosphate (lipid X) and UMP by catalyzing the attack of water at the alpha-P atom. Involved in the biosynthesis of lipid A, a phosphorylated glycolipid that anchors the lipopolysaccharide to the outer membrane of the cell. The polypeptide is UDP-2,3-diacylglucosamine hydrolase (Blochmanniella pennsylvanica (strain BPEN)).